The chain runs to 347 residues: MGCILTIEAKKSRDIDYQLRKEEGSKNETKLLLLGPGESGKSTIFKQMKIIQDDGGFSIDERLEYRYIIYGNCISQMKVLVTAAISQDLKPNNPDNETRFEKFSKISPGGNSWTLEIAEDIKQLWSDDSIQNIYRMKDKFYQLNDSAAYFFDNIGRFANENYVPTQDDVLRSRVRTTGIQEAHFKFINIEFRMLDVGGQRSERRKWIHCFDSVTAVIFCVALSEYDQTLREEESQNRMKESLMLFDEIVNSHWFRNTAFIIFFNKVDLFREKIAKIDLGDYFPAYTGGLSFDNSTQFIKKMFLDLSTGNQRIFAHFTCAIDTANIQFVFHAVRETLLKNIFNTIINY.

A lipid anchor (N-myristoyl glycine) is attached at G2. The S-palmitoyl cysteine moiety is linked to residue C3. Residues 27–347 (NETKLLLLGP…KNIFNTIINY (321 aa)) form the G-alpha domain. The segment at 30-43 (KLLLLGPGESGKST) is G1 motif. Residues 35–42 (GPGESGKS), 170–176 (LRSRVRT), 195–199 (DVGGQ), 264–267 (NKVD), and A319 contribute to the GTP site. Positions 42 and 176 each coordinate Mg(2+). The segment at 168–176 (DVLRSRVRT) is G2 motif. The G3 motif stretch occupies residues 191–200 (FRMLDVGGQR). Residues 260-267 (IIFFNKVD) form a G4 motif region. Residues 317 to 322 (TCAIDT) form a G5 motif region.

The protein belongs to the G-alpha family. G(q) subfamily. G proteins are composed of 3 units; alpha, beta and gamma. The alpha chain contains the guanine nucleotide binding site.

In terms of biological role, guanine nucleotide-binding proteins (G proteins) are involved as modulators or transducers in various transmembrane signaling systems. The protein is Guanine nucleotide-binding protein alpha-5 subunit (gpaE) of Dictyostelium discoideum (Social amoeba).